Consider the following 334-residue polypeptide: Porphobilinogen deaminase (334 aa).

S-(dipyrrolylmethanemethyl)cysteine is present on cysteine 250.

It belongs to the HMBS family. As to quaternary structure, monomer. Dipyrromethane is required as a cofactor.

It catalyses the reaction 4 porphobilinogen + H2O = hydroxymethylbilane + 4 NH4(+). The protein operates within porphyrin-containing compound metabolism; protoporphyrin-IX biosynthesis; coproporphyrinogen-III from 5-aminolevulinate: step 2/4. In terms of biological role, tetrapolymerization of the monopyrrole PBG into the hydroxymethylbilane pre-uroporphyrinogen in several discrete steps. The polypeptide is Porphobilinogen deaminase (Cutibacterium acnes (strain DSM 16379 / KPA171202) (Propionibacterium acnes)).